The following is a 99-amino-acid chain: Integration host factor subunit alpha (99 aa).

A disordered region spans residues 49-75 (FGNFDLRDKNQRPGRNPKTGEDIPITA).

This sequence belongs to the bacterial histone-like protein family. In terms of assembly, heterodimer of an alpha and a beta chain.

Its function is as follows. This protein is one of the two subunits of integration host factor, a specific DNA-binding protein that functions in genetic recombination as well as in transcriptional and translational control. This chain is Integration host factor subunit alpha, found in Salmonella agona (strain SL483).